Consider the following 697-residue polypeptide: Long-chain-fatty-acid--CoA ligase 6 (697 aa).

A helical; Signal-anchor for type III membrane protein transmembrane segment spans residues Leu-25 to Thr-45. At His-46–Met-697 the chain is on the cytoplasmic side.

The protein belongs to the ATP-dependent AMP-binding enzyme family. Requires Mg(2+) as cofactor. As to expression, expressed predominantly in erythrocyte precursors, in particular in reticulocytes, fetal blood cells derived from fetal liver, hemopoietic stem cells from cord blood, bone marrow and brain.

Its subcellular location is the mitochondrion outer membrane. It is found in the peroxisome membrane. It localises to the microsome membrane. The protein localises to the endoplasmic reticulum membrane. It carries out the reaction a long-chain fatty acid + ATP + CoA = a long-chain fatty acyl-CoA + AMP + diphosphate. It catalyses the reaction (5Z,8Z,11Z,14Z)-eicosatetraenoate + ATP + CoA = (5Z,8Z,11Z,14Z)-eicosatetraenoyl-CoA + AMP + diphosphate. The catalysed reaction is hexadecanoate + ATP + CoA = hexadecanoyl-CoA + AMP + diphosphate. The enzyme catalyses (E)-hexadec-2-enoate + ATP + CoA = (2E)-hexadecenoyl-CoA + AMP + diphosphate. It carries out the reaction 15-hydroxy-(5Z,8Z,11Z,13E)-eicosatetraenoate + ATP + CoA = 15-hydroxy-(5Z,8Z,11Z,13E)-eicosatetraenoyl-CoA + AMP + diphosphate. It catalyses the reaction 12-hydroxy-(5Z,8Z,10E,14Z)-eicosatetraenoate + ATP + CoA = 12-hydroxy-(5Z,8Z,10E,14Z)-eicosatetraenoyl-CoA + AMP + diphosphate. The catalysed reaction is 5-hydroxy-(6E,8Z,11Z,14Z)-eicosatetraenoate + ATP + CoA = 5-hydroxy-(6E,8Z,11Z,14Z)-eicosatetraenoyl-CoA + AMP + diphosphate. Catalyzes the conversion of long-chain fatty acids to their active form acyl-CoA for both synthesis of cellular lipids, and degradation via beta-oxidation. Plays an important role in fatty acid metabolism in brain and the acyl-CoAs produced may be utilized exclusively for the synthesis of the brain lipid. The protein is Long-chain-fatty-acid--CoA ligase 6 of Homo sapiens (Human).